The primary structure comprises 431 residues: Tol-Pal system protein TolB (431 aa).

The N-terminal stretch at 1–18 (MKALLLSLLLLLPVVALA) is a signal peptide. Residues 410–431 (LPLRTEKGTYQTPDWSPLPQAQ) form a disordered region.

It belongs to the TolB family. The Tol-Pal system is composed of five core proteins: the inner membrane proteins TolA, TolQ and TolR, the periplasmic protein TolB and the outer membrane protein Pal. They form a network linking the inner and outer membranes and the peptidoglycan layer.

It localises to the periplasm. Functionally, part of the Tol-Pal system, which plays a role in outer membrane invagination during cell division and is important for maintaining outer membrane integrity. The polypeptide is Tol-Pal system protein TolB (Myxococcus xanthus).